The chain runs to 798 residues: Serine/threonine-protein kinase haspin (798 aa).

The interval 1-110 (MAASLPGPGS…WKLRARPSLT (110 aa)) is disordered. The residue at position 58 (S58) is a Phosphoserine. The segment covering 59 to 70 (QSDDPDDPDDPD) has biased composition (acidic residues). S93 bears the Phosphoserine; by AURKB mark. Position 97 is a phosphothreonine (T97). S143 bears the Phosphoserine; by AURKB mark. S147 carries the phosphoserine modification. A disordered region spans residues 275 to 350 (LVVGNGPEGP…KHQEATETSL (76 aa)). Positions 300–315 (CQERGLQEAVRREHQE) are enriched in basic and acidic residues. Positions 484-798 (LQRCEKIGEG…DLLCQHSLFK (315 aa)) constitute a Protein kinase domain. ATP is bound by residues 490–498 (IGEGVFGEV), K511, 606–611 (EFGGID), 649–654 (DLHWGN), and 687–689 (DYT). D649 acts as the Proton acceptor in catalysis.

Belongs to the protein kinase superfamily. Ser/Thr protein kinase family. Haspin subfamily. The cofactor is Mg(2+). Post-translationally, autophosphorylated on both serine and threonine residues. Strongly phosphorylated during mitosis but this does not appear to significantly affect its intrinsic kinase activity. Phosphorylation by AURKB is required for full activity toward histone H3 at 'Ser-3' in mitosis. As to expression, strongly expressed in testis. Also present in thymus and bone marrow and low levels observed in prostate, intestine, lung, spleen and lymph node. Expressed in fetal skin, liver, kidney and small intestine and also in proliferating but not non-proliferating cell lines.

Its subcellular location is the nucleus. It is found in the chromosome. The protein localises to the cytoplasm. The protein resides in the cytoskeleton. It localises to the spindle. It carries out the reaction L-seryl-[protein] + ATP = O-phospho-L-seryl-[protein] + ADP + H(+). The enzyme catalyses L-threonyl-[protein] + ATP = O-phospho-L-threonyl-[protein] + ADP + H(+). Its activity is regulated as follows. Constitutive activity that does not require phosphorylation. Specifically inhibited by 3-(1H-indazol-5-yl)-N-propylimidazo[1,2-b]pyridazin-6-amine (CHR-6494). Serine/threonine-protein kinase that phosphorylates histone H3 at 'Thr-3' (H3T3ph) during mitosis. May act through H3T3ph to both position and modulate activation of AURKB and other components of the chromosomal passenger complex (CPC) at centromeres to ensure proper chromatid cohesion, metaphase alignment and normal progression through the cell cycle. The chain is Serine/threonine-protein kinase haspin from Homo sapiens (Human).